We begin with the raw amino-acid sequence, 427 residues long: Nuclear distribution protein PAC1-2 (427 aa).

The 33-residue stretch at 8–40 (QKDDLNKSIAEYLYAQDLTEIADSLCARLSLDY) folds into the LisH domain. Positions 58 to 82 (SVIRLQKKLIESENRYTALQEDIAA) form a coiled coil. WD repeat units follow at residues 106–147 (SHRA…RTLK), 149–187 (HTRE…NAGY), 194–233 (GHEH…CIRT), 236–275 (GHED…MKME), 278–336 (GHGH…ELRT), 339–378 (GHND…CMXV), and 381–420 (AHSH…SRIM).

It belongs to the WD repeat LIS1/nudF family. In terms of assembly, self-associates. Interacts with NDL1 and dynein.

It is found in the cytoplasm. The protein localises to the cytoskeleton. The protein resides in the spindle pole. Functionally, positively regulates the activity of the minus-end directed microtubule motor protein dynein. May enhance dynein-mediated microtubule sliding by targeting dynein to the microtubule plus end. Required for nuclear migration during vegetative growth as well as development. Required for retrograde early endosome (EE) transport from the hyphal tip. Required for localization of dynein to the mitotic spindle poles. Recruits additional proteins to the dynein complex at SPBs. The protein is Nuclear distribution protein PAC1-2 of Postia placenta (strain ATCC 44394 / Madison 698-R) (Brown rot fungus).